The sequence spans 282 residues: Pantothenate synthetase (282 aa).

An ATP-binding site is contributed by 30–37 (MGYLHEGH). His-37 serves as the catalytic Proton donor. Residue Gln-61 coordinates (R)-pantoate. Gln-61 serves as a coordination point for beta-alanine. 147–150 (GMKD) contacts ATP. A (R)-pantoate-binding site is contributed by Gln-153. ATP-binding positions include Val-176 and 184 to 187 (KSSR).

The protein belongs to the pantothenate synthetase family. In terms of assembly, homodimer.

The protein resides in the cytoplasm. The catalysed reaction is (R)-pantoate + beta-alanine + ATP = (R)-pantothenate + AMP + diphosphate + H(+). It participates in cofactor biosynthesis; (R)-pantothenate biosynthesis; (R)-pantothenate from (R)-pantoate and beta-alanine: step 1/1. Its function is as follows. Catalyzes the condensation of pantoate with beta-alanine in an ATP-dependent reaction via a pantoyl-adenylate intermediate. The chain is Pantothenate synthetase from Geobacillus sp. (strain WCH70).